The following is a 1216-amino-acid chain: DNA polymerase subunit gamma-1 (1216 aa).

Residues 27–37 (SSSVLDPVPSD) show a composition bias toward low complexity. Residues 27-50 (SSSVLDPVPSDGQPQSQMPSSENG) form a disordered region. Residues 38 to 50 (GQPQSQMPSSENG) are compositionally biased toward polar residues. The Exo I motif lies at 179 to 183 (VFDVE). Asp-181 (exonuclease activity) is an active-site residue. The Exo II motif lies at 250–258 (VGHNVSFDR). Ser-289 is a DNA binding site. A compositionally biased stretch (basic residues) spans 301–314 (GKHKTQHPTKRGQK). The disordered stretch occupies residues 301-321 (GKHKTQHPTKRGQKSQKNANG). The short motif at 377–385 (YCARDVWAT) is the Exo III element. A disordered region spans residues 488–518 (TASASKLPIEGAGPFGDPMDQEDPGPPSEEE). Residues 491–552 (ASKLPIEGAG…RPQHLPGHPG (62 aa)) are accessory-interacting determinant. The segment covering 506 to 518 (MDQEDPGPPSEEE) has biased composition (acidic residues). Arg-560 is an RNA binding site. Residue Ser-574 coordinates DNA. Positions 731, 740, and 745 each coordinate RNA. DNA is bound by residues Lys-783 and Thr-826. Residues 835–841 (TWLTASN) are trigger loop. Residues Ser-840 and Arg-846 each coordinate RNA. The Pol A signature appears at 864–873 (VGADVDSQEL). A 2'-deoxyribonucleoside 5'-triphosphate contacts are provided by Asp-867, Val-868, Ser-870, Glu-872, Arg-920, Lys-924, and Tyr-928. 2 residues coordinate Mg(2+): Asp-867 and Val-868. The short motif at 920–935 (REHAKVFNYGRIYGAG) is the Pol B element. 2 residues coordinate DNA: Thr-1071 and Ser-1072. A Pol C motif is present at residues 1111–1118 (HDEVRYLV). Asp-1112 lines the a 2'-deoxyribonucleoside 5'-triphosphate pocket. Asp-1112 contributes to the Mg(2+) binding site.

It belongs to the DNA polymerase type-A family. Heterotrimer composed of a catalytic subunit and a homodimer of accessory subunits (POLG:POLG2). Interacts with TTC3. Interacts with LIG3. Requires Mg(2+) as cofactor.

It localises to the mitochondrion. It is found in the mitochondrion matrix. The protein localises to the mitochondrion nucleoid. The enzyme catalyses DNA(n) + a 2'-deoxyribonucleoside 5'-triphosphate = DNA(n+1) + diphosphate. It carries out the reaction a 3'-end 2'-deoxyribonucleotidyl-deoxyribonucleotide-DNA + H2O = a 3'-end 2'-deoxyribonucleotide-DNA + a 2'-deoxyribonucleoside 5'-phosphate + H(+). The catalysed reaction is a 5'-end 2'-deoxyribose-2'-deoxyribonucleotide-DNA = (2E,4S)-4-hydroxypenten-2-al-5-phosphate + a 5'-end 5'-phospho-2'-deoxyribonucleoside-DNA + H(+). Inhibited by dideoxynucleotides such as antiviral agent zalcitabine. Catalytic subunit of DNA polymerase gamma solely responsible for replication of mitochondrial DNA (mtDNA). Replicates both heavy and light strands of the circular mtDNA genome using a single-stranded DNA template, RNA primers and the four deoxyribonucleoside triphosphates as substrates. Has 5' -&gt; 3' polymerase activity. Functionally interacts with TWNK and SSBP1 at the replication fork to form a highly processive replisome, where TWNK unwinds the double-stranded DNA template prior to replication and SSBP1 covers the parental heavy strand to enable continuous replication of the entire mitochondrial genome. A single nucleotide incorporation cycle includes binding of the incoming nucleotide at the insertion site, a phosphodiester bond formation reaction that extends the 3'-end of the primer DNA, and translocation of the primer terminus to the post-insertion site. After completing replication of a mtDNA strand, mediates 3' -&gt; 5' exonucleolytic degradation at the nick to enable proper ligation. Highly accurate due to high nucleotide selectivity and 3' -&gt; 5' exonucleolytic proofreading. Proficiently corrects base substitutions, single-base additions and deletions in non-repetitive sequences and short repeats, but displays lower proofreading activity when replicating longer homopolymeric stretches. Exerts exonuclease activity toward single-stranded DNA and double-stranded DNA containing 3'-terminal mispairs. When a misincorporation occurs, transitions from replication to a pro-nucleolytic editing mode and removes the missincorporated nucleoside in the exonuclease active site. Proceeds via an SN2 nucleolytic mechanism in which Asp-198 catalyzes phosphodiester bond hydrolysis and Glu-200 stabilizes the leaving group. As a result the primer strand becomes one nucleotide shorter and is positioned in the post-insertion site, ready to resume DNA synthesis. Exerts 5'-deoxyribose phosphate (dRP) lyase activity and mediates repair-associated mtDNA synthesis (gap filling) in base-excision repair pathway. Catalyzes the release of the 5'-terminal 2-deoxyribose-5-phosphate sugar moiety from incised apurinic/apyrimidinic (AP) sites to produce a substrate for DNA ligase. The dRP lyase reaction does not require divalent metal ions and likely proceeds via a Schiff base intermediate in a beta-elimination reaction mechanism. The protein is DNA polymerase subunit gamma-1 of Rattus norvegicus (Rat).